Consider the following 388-residue polypeptide: Chorismate synthase (388 aa).

NADP(+) is bound by residues R39 and R45. FMN-binding positions include 130–132 (RSS), 251–252 (NA), A296, 311–315 (KPIPT), and R337.

The protein belongs to the chorismate synthase family. As to quaternary structure, homotetramer. It depends on FMNH2 as a cofactor.

It carries out the reaction 5-O-(1-carboxyvinyl)-3-phosphoshikimate = chorismate + phosphate. It functions in the pathway metabolic intermediate biosynthesis; chorismate biosynthesis; chorismate from D-erythrose 4-phosphate and phosphoenolpyruvate: step 7/7. Its function is as follows. Catalyzes the anti-1,4-elimination of the C-3 phosphate and the C-6 proR hydrogen from 5-enolpyruvylshikimate-3-phosphate (EPSP) to yield chorismate, which is the branch point compound that serves as the starting substrate for the three terminal pathways of aromatic amino acid biosynthesis. This reaction introduces a second double bond into the aromatic ring system. In Streptococcus equi subsp. zooepidemicus (strain MGCS10565), this protein is Chorismate synthase.